A 226-amino-acid polypeptide reads, in one-letter code: Spermatogenesis-associated protein 25 (226 aa).

A helical transmembrane segment spans residues 153-173; the sequence is ICILTLAMMIAGIPTVPVPGL.

It belongs to the SPATA25 family. In terms of tissue distribution, expressed strongly in testis, weakly in epididymis and not detected in other tissues.

The protein resides in the membrane. Its function is as follows. May play a role in spermatogenesis. This Mus musculus (Mouse) protein is Spermatogenesis-associated protein 25 (Spata25).